We begin with the raw amino-acid sequence, 291 residues long: MTERDFDTPVETPTVQPAPAQGTKPAQTVPVVAVVLAAGFGTRFDPDNPKQLVSVGGKPIVCWSIDAFEHCDRVSDIVVVVNPKVRGEVETLVGEMGYTKVRVIIDGGDERVDSTATALDMLATAGIPDDAKILIHDAVRPFVEQSAIDGSIDALDQFTAATVAYASTDTVLLTEDLGDLKVVKSVPDRPNTFRAQTPQSFRFATIRHAYDLAAADPDFHPTDDTRVVVDYLPDEPVAIVSGAETNLKITTLEDIPTAERIAEEILGRDPKEEARARMHALLAQAAGQMHR.

The tract at residues 1-23 is disordered; it reads MTERDFDTPVETPTVQPAPAQGT.

It belongs to the IspD/TarI cytidylyltransferase family. IspD subfamily.

The catalysed reaction is 2-C-methyl-D-erythritol 4-phosphate + CTP + H(+) = 4-CDP-2-C-methyl-D-erythritol + diphosphate. It participates in isoprenoid biosynthesis; isopentenyl diphosphate biosynthesis via DXP pathway; isopentenyl diphosphate from 1-deoxy-D-xylulose 5-phosphate: step 2/6. Functionally, catalyzes the formation of 4-diphosphocytidyl-2-C-methyl-D-erythritol from CTP and 2-C-methyl-D-erythritol 4-phosphate (MEP). The polypeptide is 2-C-methyl-D-erythritol 4-phosphate cytidylyltransferase (Bifidobacterium longum subsp. infantis (strain ATCC 15697 / DSM 20088 / JCM 1222 / NCTC 11817 / S12)).